The primary structure comprises 359 residues: Ribosomal RNA small subunit methyltransferase mra1 (359 aa).

Residues 1-10 are compositionally biased toward basic residues; that stretch reads MPTYSKRKSR. 2 disordered regions span residues 1–62 and 98–118; these read MPTY…EDEE and VKSDEEKEDPNGASSKTVKAR. Position 12 is a phosphoserine (Ser-12). Positions 18 to 39 are enriched in polar residues; sequence KTNQPKFIKRSQSSETITSGET. At Thr-33 the chain carries Phosphothreonine. A Phosphoserine modification is found at Ser-100. Residues Leu-287, Gly-314, 319 to 321, and 334 to 339 each bind S-adenosyl-L-methionine; these read GPD and ISDYPL.

The protein belongs to the class IV-like SAM-binding methyltransferase superfamily. RNA methyltransferase NEP1 family. Homodimer.

Its subcellular location is the nucleus. The protein resides in the nucleolus. It catalyses the reaction a pseudouridine in rRNA + S-adenosyl-L-methionine = an N(1)-methylpseudouridine in rRNA + S-adenosyl-L-homocysteine + H(+). Functionally, S-adenosyl-L-methionine-dependent pseudouridine N(1)-methyltransferase that methylates the pseudouridine corresponding to position 1189 (Psi1189) in S.cerevisiae 18S rRNA. Involved the biosynthesis of the hypermodified N1-methyl-N3-(3-amino-3-carboxypropyl) pseudouridine (m1acp3-Psi) conserved in eukaryotic 18S rRNA. Also has an essential role in 40S ribosomal subunit biogenesis independent on its methyltransferase activity, facilitating the incorporation of ribosomal protein S19 during the formation of pre-ribosomes. Essential for cell growth. It also has a key role in promoting the mating function. The polypeptide is Ribosomal RNA small subunit methyltransferase mra1 (Schizosaccharomyces pombe (strain 972 / ATCC 24843) (Fission yeast)).